Consider the following 596-residue polypeptide: MSDAQDSRVGSMFGPYHLKRLLGRGGMGEVYEAEHTVKEWTVAVKLMTAEFSKDPVFRERMKREARIAGRLQEPHVVPIHDYGEVDGQMFLEMRLVEGTDLDSVLKRFGPLTPPRAVAIITQIASALDAAHADGVMHRDVKPQNILITRDDFAYLVDFGIASATTDEKLTQLGTAVGTWKYMAPERFSNDEVTYRADIYALACVLHECLTGAPPYRADSAGTLVSSHLMGPIPQPSAIRPGIPKAFDAVVARGMAKKPEDRYASAGDLALAAHEALSDPDQDHAADILRRSQESTLPGTAAVTAQPPTMPTVTPPPIQAAPTGQPSWAPNSGPMPASGPTPTPQYYQGGGWGAPPSGGPSPWAQTPRKTNPWPLVAGAAAVVLVLVLGAIGIWIANRPKPVQPPQPVAEERLSALLLNSSEVNAVMGSSSMQPGKPITSMDSSPVTVSLPDCQGALYTSQDPVYAGTGYTAINGLISSEPGDNYEHWVNQAVVAFPTADKARAFVQTSADKWKNCAGKTVTVTNKAKTYRWTFADVKGSPPTITVIDTQEGAEGWECQRAMSVANNVVVDVNACGYQITNQAGQIAAKIVDKVNKE.

Over 1–373 (MSDAQDSRVG…QTPRKTNPWP (373 aa)) the chain is Cytoplasmic. The 261-residue stretch at 16–276 (YHLKRLLGRG…DLALAAHEAL (261 aa)) folds into the Protein kinase domain. Residues 22-30 (LGRGGMGEV) and Lys45 each bind ATP. Asp139 acts as the Proton acceptor in catalysis. Thr170 carries the post-translational modification Phosphothreonine. The tract at residues 292–368 (QESTLPGTAA…PSPWAQTPRK (77 aa)) is disordered. The span at 307–318 (PTMPTVTPPPIQ) shows a compositional bias: pro residues. The helical transmembrane segment at 374 to 394 (LVAGAAAVVLVLVLGAIGIWI) threads the bilayer. The Extracellular segment spans residues 395–596 (ANRPKPVQPP…AKIVDKVNKE (202 aa)).

This sequence belongs to the protein kinase superfamily. Ser/Thr protein kinase family. Autophosphorylated on threonine and serine residues.

The protein resides in the cell membrane. The catalysed reaction is L-seryl-[protein] + ATP = O-phospho-L-seryl-[protein] + ADP + H(+). It catalyses the reaction L-threonyl-[protein] + ATP = O-phospho-L-threonyl-[protein] + ADP + H(+). The polypeptide is Serine/threonine-protein kinase PknH (pknH) (Mycobacterium bovis (strain ATCC BAA-935 / AF2122/97)).